We begin with the raw amino-acid sequence, 490 residues long: Cytochrome P450 2C29 (490 aa).

The N-terminal stretch at 1 to 25 is a signal peptide; the sequence is MDLVVFLALTLSCLILLSLWRQSSG. N6-acetyllysine is present on residues Lys-249, Lys-252, and Lys-375. Cys-435 lines the heme pocket.

The protein belongs to the cytochrome P450 family. The cofactor is heme. As to expression, expressed in liver as well as in extrahepatic tissues including brain, kidney, lung, heart, and intestine.

It localises to the endoplasmic reticulum membrane. Its subcellular location is the microsome membrane. It carries out the reaction an organic molecule + reduced [NADPH--hemoprotein reductase] + O2 = an alcohol + oxidized [NADPH--hemoprotein reductase] + H2O + H(+). It catalyses the reaction (5Z,8Z,11Z,14Z)-eicosatetraenoate + reduced [NADPH--hemoprotein reductase] + O2 = 14,15-epoxy-(5Z,8Z,11Z)-eicosatrienoate + oxidized [NADPH--hemoprotein reductase] + H2O + H(+). Its pathway is lipid metabolism; arachidonate metabolism. A cytochrome P450 monooxygenase that selectively catalyzes the epoxidation of 14,15 double bond of (5Z,8Z,11Z,14Z)-eicosatetraenoic acid (arachidonate) forming 14,15-epoxyeicosatrienoic acid (14,15-EET) regioisomer. Mechanistically, uses molecular oxygen inserting one oxygen atom into a substrate, and reducing the second into a water molecule, with two electrons provided by NADPH via cytochrome P450 reductase (CPR; NADPH--hemoprotein reductase). The protein is Cytochrome P450 2C29 of Mus musculus (Mouse).